The chain runs to 253 residues: MAPVTATHQEAQESVKNVIQDLLNLMVQVSQYDTNPSSSNNNTPTSSRASGGGGGGGGGHASSRDIIAQSLQTLDASLLSVYRTANLLPSSPSSGPSNNQPQQGTTELERAEAAQFASTFNNTHNPYAPHVHQPGPQNPGIPIPLITYVENGRNPDVYTREFIELVRRSNQLMRGKMHAFRDFRDVLAGEMEAALPELREDIKRVVEATGGPGPAEGSEERAREGVVGSLSAGGEGQQGQGQGQQGQGQQSGQ.

3 disordered regions span residues 32-63, 88-109, and 206-253; these read YDTN…HASS, LPSS…TELE, and VEAT…QSGQ. Low complexity predominate over residues 34-47; the sequence is TNPSSSNNNTPTSS. Residues 50-60 are compositionally biased toward gly residues; it reads SGGGGGGGGGH. Over residues 88 to 104 the composition is skewed to low complexity; sequence LPSSPSSGPSNNQPQQG. Residues 231-253 show a composition bias toward gly residues; that stretch reads SAGGEGQQGQGQGQQGQGQQSGQ.

Belongs to the Mediator complex subunit 10 family. As to quaternary structure, component of the Mediator complex.

It localises to the nucleus. Component of the Mediator complex, a coactivator involved in the regulated transcription of nearly all RNA polymerase II-dependent genes. Mediator functions as a bridge to convey information from gene-specific regulatory proteins to the basal RNA polymerase II transcription machinery. Mediator is recruited to promoters by direct interactions with regulatory proteins and serves as a scaffold for the assembly of a functional preinitiation complex with RNA polymerase II and the general transcription factors. The chain is Mediator of RNA polymerase II transcription subunit 10 (nut2) from Neurospora crassa (strain ATCC 24698 / 74-OR23-1A / CBS 708.71 / DSM 1257 / FGSC 987).